We begin with the raw amino-acid sequence, 367 residues long: UDP-N-acetylglucosamine--N-acetylmuramyl-(pentapeptide) pyrophosphoryl-undecaprenol N-acetylglucosamine transferase (367 aa).

UDP-N-acetyl-alpha-D-glucosamine-binding positions include 15-17 (TGG), Asn127, Arg163, Ser191, Ile249, and Gln294.

The protein belongs to the glycosyltransferase 28 family. MurG subfamily.

Its subcellular location is the cell inner membrane. It carries out the reaction di-trans,octa-cis-undecaprenyl diphospho-N-acetyl-alpha-D-muramoyl-L-alanyl-D-glutamyl-meso-2,6-diaminopimeloyl-D-alanyl-D-alanine + UDP-N-acetyl-alpha-D-glucosamine = di-trans,octa-cis-undecaprenyl diphospho-[N-acetyl-alpha-D-glucosaminyl-(1-&gt;4)]-N-acetyl-alpha-D-muramoyl-L-alanyl-D-glutamyl-meso-2,6-diaminopimeloyl-D-alanyl-D-alanine + UDP + H(+). It functions in the pathway cell wall biogenesis; peptidoglycan biosynthesis. Its function is as follows. Cell wall formation. Catalyzes the transfer of a GlcNAc subunit on undecaprenyl-pyrophosphoryl-MurNAc-pentapeptide (lipid intermediate I) to form undecaprenyl-pyrophosphoryl-MurNAc-(pentapeptide)GlcNAc (lipid intermediate II). This is UDP-N-acetylglucosamine--N-acetylmuramyl-(pentapeptide) pyrophosphoryl-undecaprenol N-acetylglucosamine transferase from Burkholderia orbicola (strain MC0-3).